The chain runs to 260 residues: Phosphatidylglycerol--prolipoprotein diacylglyceryl transferase (260 aa).

The next 4 helical transmembrane spans lie at 17 to 37, 52 to 72, 85 to 105, and 113 to 133; these read VVKW…SWIF, LTAA…LHVI, ILSG…IGLW, and FNLG…QAIG. Arg-134 provides a ligand contact to a 1,2-diacyl-sn-glycero-3-phospho-(1'-sn-glycerol). 3 helical membrane passes run 170 to 190, 198 to 218, and 227 to 247; these read VPTQ…SLFI, GQLF…IGFV, and GLEQ…PFFI.

The protein belongs to the Lgt family.

The protein resides in the cell membrane. The enzyme catalyses L-cysteinyl-[prolipoprotein] + a 1,2-diacyl-sn-glycero-3-phospho-(1'-sn-glycerol) = an S-1,2-diacyl-sn-glyceryl-L-cysteinyl-[prolipoprotein] + sn-glycerol 1-phosphate + H(+). The protein operates within protein modification; lipoprotein biosynthesis (diacylglyceryl transfer). Catalyzes the transfer of the diacylglyceryl group from phosphatidylglycerol to the sulfhydryl group of the N-terminal cysteine of a prolipoprotein, the first step in the formation of mature lipoproteins. This Dehalococcoides mccartyi (strain ATCC BAA-2266 / KCTC 15142 / 195) (Dehalococcoides ethenogenes (strain 195)) protein is Phosphatidylglycerol--prolipoprotein diacylglyceryl transferase.